Consider the following 222-residue polypeptide: DnaJ homolog subfamily B member 9 (222 aa).

Positions 1–23 (MATPQSVFVFAICILMITELILA) are cleaved as a signal peptide. The J domain maps to 26–90 (SYYDILGVPK…NSRKEYDTIG (65 aa)). Residues 91–222 (HSAFTNGKGQ…VTTYTDCSGQ (132 aa)) form a divergent targeting domain region. Serine 133 bears the Phosphoserine mark.

As to quaternary structure, interacts with HSPA5/BiP; interaction is direct. Interacts with ERN1/IRE1 (via the luminal region). Interacts with DERL1. In terms of processing, not N-glycosylated.

The protein localises to the endoplasmic reticulum lumen. In terms of biological role, co-chaperone for Hsp70 protein HSPA5/BiP that acts as a key repressor of the ERN1/IRE1-mediated unfolded protein response (UPR). J domain-containing co-chaperones stimulate the ATPase activity of Hsp70 proteins and are required for efficient substrate recognition by Hsp70 proteins. In the unstressed endoplasmic reticulum, interacts with the luminal region of ERN1/IRE1 and selectively recruits HSPA5/BiP: HSPA5/BiP disrupts the dimerization of the active ERN1/IRE1 luminal region, thereby inactivating ERN1/IRE1. Also involved in endoplasmic reticulum-associated degradation (ERAD) of misfolded proteins. Required for survival of B-cell progenitors and normal antibody production. The sequence is that of DnaJ homolog subfamily B member 9 from Mus musculus (Mouse).